The primary structure comprises 205 residues: Small ribosomal subunit protein uS3 (205 aa).

A KH type-2 domain is found at 12–80 (VRQFLAKELA…PAQINIAEVR (69 aa)).

This sequence belongs to the universal ribosomal protein uS3 family. In terms of assembly, part of the 30S ribosomal subunit. Forms a tight complex with proteins S10 and S14.

Binds the lower part of the 30S subunit head. Binds mRNA in the 70S ribosome, positioning it for translation. The chain is Small ribosomal subunit protein uS3 from Buchnera aphidicola subsp. Acyrthosiphon kondoi (Acyrthosiphon kondoi symbiotic bacterium).